The primary structure comprises 318 residues: uncharacterized protein (318 aa).

This sequence belongs to the NAD(P)-dependent epimerase/dehydratase family.

This is an uncharacterized protein from Staphylococcus epidermidis (strain ATCC 12228 / FDA PCI 1200).